Reading from the N-terminus, the 698-residue chain is Transcription factor cwo (698 aa).

A basic motif; degenerate region spans residues 62 to 75; it reads QDPLSHRIIEKRRR. The bHLH domain occupies 62–117; the sequence is QDPLSHRIIEKRRRDRMNSCLADLSRLIPPQYQRKGRGRIEKTEIIEMAIRHLKHL. The tract at residues 76–117 is helix-loop-helix motif; it reads DRMNSCLADLSRLIPPQYQRKGRGRIEKTEIIEMAIRHLKHL. The Orange domain maps to 128–159; sequence YRSGYMDCMKEAAKFLYDVHMQDFCHRLLGRL. Disordered stretches follow at residues 257 to 319 and 349 to 369; these read SSPA…ASST and STAP…FESS. Residues 280–318 show a composition bias toward low complexity; that stretch reads APPAADNVPSNSTGSGSAAACAGGNSNSSGSNSSNAASS. The span at 359–369 shows a compositional bias: basic and acidic residues; it reads TDSSHHDFESS.

As to expression, expressed in adult brain where it is detected in the dorsal lateral neurons, small and large ventral lateral neurons and dorsal neurons 1, 2 and 3 (at protein level). Expressed at constant levels in a 12 hour light / 12 hour day cycle (at protein level). Strongly expressed in pacemaker neurons. In adults, mRNA expression oscillates in a circadian manner with a peak at around 14 hour Zeitgeber time. mRNA levels oscillate in a rhythmic manner in both 12 hour light / 12 hour dark and constant dark conditions with a morning peak around the time of lights-on and an evening peak around the time of lights-off in light/dark conditions. During stage 8 of embryonic development, expressed in the anterior and posterior midgut primordia and expression in the gut continues throughout embryonic development. During germ band retraction, expression is initiated in many tissues in a prominent segmentally repeated pattern. Later, expression is ubiquitous but has higher levels in segmentally repeated clusters of cells. Expression is also found in cells of the amnioserosa, in the head region, in posterior spiracles and in tracheal trees.

Its subcellular location is the nucleus. Its function is as follows. Plays a role in the regulation of circadian rhythms. Transcriptional repressor which inhibits Clock-mediated transcriptional activation by binding to E boxes in the promoters of Clock target genes and repressing their transcription. E box binding activity is time-dependent with higher binding activity seen in the early morning (zeitgeber time 2) than early evening (zeitgeber time 14) and is dependent on the presence of the circadian protein per. It is likely that per binds to Clock-cycle heterodimers, reducing their affinity for E box binding and allowing cwo to bind instead. Negatively regulates its own expression. The protein is Transcription factor cwo of Drosophila melanogaster (Fruit fly).